Consider the following 224-residue polypeptide: Small ribosomal subunit protein uS7 (224 aa).

It belongs to the universal ribosomal protein uS7 family. In terms of assembly, part of the 30S ribosomal subunit.

In terms of biological role, one of the primary rRNA binding proteins, it binds directly to 16S rRNA where it nucleates assembly of the head domain of the 30S subunit. Is located at the subunit interface close to the decoding center. The chain is Small ribosomal subunit protein uS7 from Caldivirga maquilingensis (strain ATCC 700844 / DSM 13496 / JCM 10307 / IC-167).